The chain runs to 442 residues: DDB1- and CUL4-associated factor 12-B (442 aa).

Residues 1–13 (MTRRPVSRKRRAT) show a composition bias toward basic residues. Positions 1 to 31 (MTRRPVSRKRRATHGTGPGEQSDWDHSAHKR) are disordered. 4 WD repeats span residues 132–173 (SHQS…PVCV), 177–215 (GHNDWIFSIAWISDTMAVSGSRDGFMALWEMTDEVVNKR), 245–284 (PVNCKVRALAFNGNNKELGAVSLDGFFHLWKAEQTLSKLL), and 333–370 (EQGSGIRSVSFYEHIVTVGTGQGALLFYDIRAQRFLED).

This sequence belongs to the WD repeat DCAF12 family. Component of the DCX(DCAF12) E3 ubiquitin ligase complex, at least composed of cul4 (cul4a or cul4b), ddb1, dcaf12 and rbx1.

The protein localises to the cytoplasm. It localises to the cytoskeleton. The protein resides in the microtubule organizing center. It is found in the centrosome. Its subcellular location is the nucleus. It participates in protein modification; protein ubiquitination. Substrate-recognition component of a DCX (DDB1-CUL4-X-box) E3 ubiquitin-protein ligase complex of the DesCEND (destruction via C-end degrons) pathway, which recognizes a C-degron located at the extreme C terminus of target proteins, leading to their ubiquitination and degradation. The C-degron recognized by the DesCEND pathway is usually a motif of less than ten residues and can be present in full-length proteins, truncated proteins or proteolytically cleaved forms. The DCX(DCAF12) complex specifically recognizes proteins with a diglutamate (Glu-Glu) at the C-terminus leading to their ubiquitination and degradation. Also directly recognizes the C-terminal glutamate-leucine (Glu-Leu) degron as an alternative degron in proteins leading to their ubiquitination and degradation. The chain is DDB1- and CUL4-associated factor 12-B (dcaf12-b) from Xenopus laevis (African clawed frog).